We begin with the raw amino-acid sequence, 511 residues long: Keratin, type II cytoskeletal 72 (511 aa).

The tract at residues 1 to 124 (MSRQLTHFPR…DPEIQRVRAQ (124 aa)) is head. Residues 125–160 (EREQIKALNNKFASFIDKVRFLEQQNQVLETKWNLL) are coil 1A. Residues 125-438 (EREQIKALNN…KLLESEECRM (314 aa)) enclose the IF rod domain. A linker 1 region spans residues 161–179 (QQLDLNNCRKNLEPIYEGY). The coil 1B stretch occupies residues 180–271 (ISNLQKQLEM…CLYEGEITQI (92 aa)). A linker 12 region spans residues 272 to 295 (QSHISDTSIVLSMDNNRDLDLDSI). The tract at residues 296 to 434 (IAEVRAQYEE…ATYRKLLESE (139 aa)) is coil 2. The tract at residues 435 to 511 (ECRMSGEYPN…SSCATKKASR (77 aa)) is tail. The disordered stretch occupies residues 486-511 (GSCGSELKDPLAKTSGSSCATKKASR).

Belongs to the intermediate filament family. In terms of assembly, heterotetramer of two type I and two type II keratins. Highly expressed in hair follicles from scalp and eyebrow. Also expressed in palmoplantar epidermis. Not expressed in face skin despite the presence of fine hairs histologically. In hair, it is specifically present in the inner root sheath (IRS) of the hair follicle. Present in the IRS cuticle, but not in Henle or Huxley layers of the IRS. In the IRS cuticle, its presence is delayed up to the height of the apex of the dermal papilla (at protein level).

Its function is as follows. Has a role in hair formation. Specific component of keratin intermediate filaments in the inner root sheath (IRS) of the hair follicle. This is Keratin, type II cytoskeletal 72 (KRT72) from Homo sapiens (Human).